The primary structure comprises 1283 residues: Oxysterol-binding protein homolog 2 (1283 aa).

Ser2 carries the post-translational modification N-acetylserine. Position 7 is a phosphoserine (Ser7). 2 ANK repeats span residues 106–134 (NGNTPLHLAAAQSRSDVISFLLSQKSIND) and 206–235 (TGTTLLYEYSQKKDIEMCQWLLKHGAEATV). Residues 289-386 (PPTYKGFLKK…WVNAIQSAIR (98 aa)) form the PH domain. 7 positions are modified to phosphoserine: Ser422, Ser445, Ser451, Ser455, Ser458, Ser459, and Ser486. The residue at position 488 (Thr488) is a Phosphothreonine. Polar residues-rich tracts occupy residues 504–518 (SNTLKSNRSMQSGSG) and 530–551 (ANLSQSNTTTGSTASLSDNNYI). Disordered stretches follow at residues 504–571 (SNTL…LGIN) and 702–721 (TAGNKESLENDKEQESDTTA). Residues Ser512 and Ser515 each carry the phosphoserine modification. Acidic residues predominate over residues 554 to 568 (FEGDEANSDDEEEDL). Residues 707 to 716 (ESLENDKEQE) show a composition bias toward basic and acidic residues. Ser717 carries the post-translational modification Phosphoserine. The FFAT motif lies at 745-751 (EFYDAAE). Positions 767–834 (STAAAPKHAP…SLKNFKAEDK (68 aa)) are disordered. A Phosphothreonine modification is found at Thr783. Ser787 is subject to Phosphoserine. Basic and acidic residues-rich tracts occupy residues 791-810 (QDEKSKIESNVEKTSQKFEK) and 818-834 (DEPKTDQSLKNFKAEDK). Phosphoserine occurs at positions 825 and 1151. The interval 897–1268 (SLWAVLKSMV…KYWRYTGKYW (372 aa)) is OSBP-related domain (ORD).

Belongs to the OSBP family. As to quaternary structure, interacts with SCS2.

Its subcellular location is the cell membrane. It is found in the endoplasmic reticulum membrane. Lipid transport protein (LTP) involved in non-vesicular transfer of lipids between membranes. Functions in phosphoinositide-coupled directional transport of various lipids by carrying the lipid molecule in a hydrophobic pocket and transferring it between membranes through the cytosol. Involved in maintenance of intracellular sterol distribution and homeostasis. Binds and transports sterol. Plays a role in the positive regulation of vesicular transport of ceramide from the ER to the Golgi, negatively regulating COPII-mediated ER export of cargos. In Saccharomyces cerevisiae (strain ATCC 204508 / S288c) (Baker's yeast), this protein is Oxysterol-binding protein homolog 2.